Here is a 253-residue protein sequence, read N- to C-terminus: Triosephosphate isomerase (253 aa).

8-10 (NWK) contacts substrate. Residue His93 is the Electrophile of the active site. Glu165 (proton acceptor) is an active-site residue. Residues Gly171, Ser210, and 231-232 (GG) each bind substrate.

This sequence belongs to the triosephosphate isomerase family. In terms of assembly, homodimer.

It localises to the cytoplasm. It carries out the reaction D-glyceraldehyde 3-phosphate = dihydroxyacetone phosphate. The protein operates within carbohydrate biosynthesis; gluconeogenesis. It participates in carbohydrate degradation; glycolysis; D-glyceraldehyde 3-phosphate from glycerone phosphate: step 1/1. In terms of biological role, involved in the gluconeogenesis. Catalyzes stereospecifically the conversion of dihydroxyacetone phosphate (DHAP) to D-glyceraldehyde-3-phosphate (G3P). This is Triosephosphate isomerase from Francisella tularensis subsp. tularensis (strain FSC 198).